We begin with the raw amino-acid sequence, 299 residues long: Regucalcin (299 aa).

Glu-18 is a binding site for a divalent metal cation. Positions 101, 103, and 121 each coordinate substrate. A divalent metal cation contacts are provided by Asn-154 and Asp-204. Asp-204 acts as the Proton donor/acceptor in catalysis.

Belongs to the SMP-30/CGR1 family. The cofactor is Zn(2+). Mn(2+) serves as cofactor. Requires Ca(2+) as cofactor. Mg(2+) is required as a cofactor. As to expression, expressed in the liver, and in the pronephros from the late tadpole stage.

It localises to the cytoplasm. The catalysed reaction is D-glucono-1,5-lactone + H2O = D-gluconate + H(+). Its pathway is cofactor biosynthesis; L-ascorbate biosynthesis via UDP-alpha-D-glucuronate pathway; L-ascorbate from UDP-alpha-D-glucuronate: step 3/4. Functionally, gluconolactonase with low activity towards other sugar lactones, including gulonolactone and galactonolactone. Catalyzes a key step in ascorbic acid (vitamin C) biosynthesis. Can also hydrolyze diisopropyl phosphorofluoridate and phenylacetate (in vitro). Calcium-binding protein. Modulates Ca(2+) signaling, and Ca(2+)-dependent cellular processes and enzyme activities. The sequence is that of Regucalcin from Xenopus laevis (African clawed frog).